The following is a 321-amino-acid chain: G-protein coupled receptor aex-2 (321 aa).

The Extracellular segment spans residues 1–24 (MNSTDIIANVTKPFVENLTLGETA). Residues Asn2, Asn9, and Asn17 are each glycosylated (N-linked (GlcNAc...) asparagine). Residues 25-45 (FYISCGIVGTVFNALVLWIAL) form a helical membrane-spanning segment. At 46–55 (TYINTEDKPR) the chain is on the cytoplasmic side. A helical transmembrane segment spans residues 56-76 (QIIVINMTVADLLMCIVYMKT). Topologically, residues 77-90 (RPWLSHFNLWLCHP) are extracellular. A disulfide bridge links Cys88 with Cys161. Residues 91-111 (YYVIIWTCQMCSCLNLVWLNV) traverse the membrane as a helical segment. Residues 112 to 132 (DKLIYIQFPLHYYQIVNRKRL) lie on the Cytoplasmic side of the membrane. The helical transmembrane segment at 133–153 (LWITAATWGGLYAMNIALVTF) threads the bilayer. Residues 154-175 (LKITRGSCLGVSLNPYVYLLSP) are Extracellular-facing. A helical transmembrane segment spans residues 176 to 196 (IFYVVMILTSFSLSALIYCIA). Topologically, residues 197–221 (HNLTHMEERQRSKLFRRLFFLFSST) are cytoplasmic. Residues 222 to 242 (LWTFFTCLPYRLLYLFSIFCG) form a helical membrane-spanning segment. Residues 243-254 (ETCQINNYYKTA) lie on the Extracellular side of the membrane. A helical membrane pass occupies residues 255-275 (TNLFFRLLIVGIMINPVITIW). Residues 276 to 321 (TQRIYRLRLMRMFGRLRENSSTEVLMVSNRRASERPPEHTPLRCDM) lie on the Cytoplasmic side of the membrane.

This sequence belongs to the G-protein coupled receptor 1 family. As to expression, expressed in the intestinal muscle, anal depressor, AVL and DVB GABAergic neurons, enteric muscles, the nerve ring, the ventral nerve cord and head mesodermal cells.

The protein localises to the cell membrane. It localises to the cell projection. The protein resides in the cilium. Its function is as follows. G-protein coupled receptor for the nlp-40 neuropeptide. The activity of this receptor is mediated by G proteins which activate adenylyl cyclase. Plays a role in the defecation motor program, which is a coordinated series of three muscle contractions that occurs every 45 seconds. Specifically, acts in GABAergic neurons, such as AVL and DVB, to control the expulsion step of defecation. Required for fatty acid uptake and metabolism by intestinal cells and therefore regulates the levels of triglycerides in the intestine. The polypeptide is G-protein coupled receptor aex-2 (Caenorhabditis elegans).